A 293-amino-acid polypeptide reads, in one-letter code: Protease HtpX homolog (293 aa).

Transmembrane regions (helical) follow at residues 5 to 25 (IFLFIVTNLAILLMLSITLRL) and 43 to 63 (ALLVFSAVLGFGGSLISLAMS). His-148 contacts Zn(2+). Glu-149 is an active-site residue. His-152 lines the Zn(2+) pocket. 2 helical membrane passes run 159 to 179 (VTLALIQGVVNTFVIFLSRII) and 199 to 219 (FVTSLIAQMVLGILATIIVMW). Residue Glu-225 coordinates Zn(2+).

This sequence belongs to the peptidase M48B family. Requires Zn(2+) as cofactor.

The protein localises to the cell inner membrane. This is Protease HtpX homolog from Nitrosomonas europaea (strain ATCC 19718 / CIP 103999 / KCTC 2705 / NBRC 14298).